Here is a 257-residue protein sequence, read N- to C-terminus: UPF0246 protein Ping_3037 (257 aa).

Belongs to the UPF0246 family.

The polypeptide is UPF0246 protein Ping_3037 (Psychromonas ingrahamii (strain DSM 17664 / CCUG 51855 / 37)).